Reading from the N-terminus, the 209-residue chain is Orotate phosphoribosyltransferase (209 aa).

Residues Arg96, Lys100, His102, and Glu122–Ser130 each bind 5-phospho-alpha-D-ribose 1-diphosphate. Position 126 (Ser126) interacts with orotate.

Belongs to the purine/pyrimidine phosphoribosyltransferase family. PyrE subfamily. As to quaternary structure, homodimer. Mg(2+) is required as a cofactor.

The enzyme catalyses orotidine 5'-phosphate + diphosphate = orotate + 5-phospho-alpha-D-ribose 1-diphosphate. Its pathway is pyrimidine metabolism; UMP biosynthesis via de novo pathway; UMP from orotate: step 1/2. Catalyzes the transfer of a ribosyl phosphate group from 5-phosphoribose 1-diphosphate to orotate, leading to the formation of orotidine monophosphate (OMP). In Listeria monocytogenes serotype 4b (strain F2365), this protein is Orotate phosphoribosyltransferase.